Here is a 353-residue protein sequence, read N- to C-terminus: uncharacterized protein (353 aa).

The first 18 residues, 1–18 (MKFVLFAQLAAVAAPAIA), serve as a signal peptide directing secretion. The disordered stretch occupies residues 94–119 (EGGNVRRVPGGPSQSARQIGDSSTPM). Polar residues predominate over residues 105–119 (PSQSARQIGDSSTPM). N-linked (GlcNAc...) asparagine glycans are attached at residues N165 and N312.

Belongs to the glycosyl hydrolase 3 family.

The protein resides in the secreted. This is an uncharacterized protein from Arthroderma benhamiae (strain ATCC MYA-4681 / CBS 112371) (Trichophyton mentagrophytes).